Consider the following 166-residue polypeptide: Probable dual specificity protein phosphatase H1 homolog (166 aa).

A Tyrosine-protein phosphatase domain is found at 25–166 (DITKITDYVY…FLNQIIDKYI (142 aa)). The Phosphocysteine intermediate role is filled by cysteine 108.

Belongs to the protein-tyrosine phosphatase family. Non-receptor class dual specificity subfamily. Homodimer.

The protein resides in the virion. Its subcellular location is the host cytoplasm. The enzyme catalyses O-phospho-L-tyrosyl-[protein] + H2O = L-tyrosyl-[protein] + phosphate. The catalysed reaction is O-phospho-L-seryl-[protein] + H2O = L-seryl-[protein] + phosphate. Serine/Tyrosine phosphatase which down-regulates cellular antiviral response by dephosphorylating activated STAT1 and blocking interferon (IFN)-stimulated innate immune responses. The chain is Probable dual specificity protein phosphatase H1 homolog from Vertebrata (FPV).